Consider the following 204-residue polypeptide: 3-dehydroquinate dehydratase (204 aa).

3-dehydroquinate is bound by residues Ser9, Glu30 to Arg32, and Arg57. His108 (proton donor/acceptor) is an active-site residue. The Schiff-base intermediate with substrate role is filled by Lys133. The 3-dehydroquinate site is built by Arg167, Thr186, and Gln190.

This sequence belongs to the type-I 3-dehydroquinase family. As to quaternary structure, homodimer.

The catalysed reaction is 3-dehydroquinate = 3-dehydroshikimate + H2O. It functions in the pathway metabolic intermediate biosynthesis; chorismate biosynthesis; chorismate from D-erythrose 4-phosphate and phosphoenolpyruvate: step 3/7. Functionally, involved in the third step of the chorismate pathway, which leads to the biosynthesis of aromatic amino acids. Catalyzes the cis-dehydration of 3-dehydroquinate (DHQ) and introduces the first double bond of the aromatic ring to yield 3-dehydroshikimate. The chain is 3-dehydroquinate dehydratase from Metallosphaera sedula (strain ATCC 51363 / DSM 5348 / JCM 9185 / NBRC 15509 / TH2).